The primary structure comprises 826 residues: Prominin-1-A (826 aa).

A run of 3 helical transmembrane segments spans residues 50–70 (YYEP…LFVV), 106–126 (VVCA…GLLF), and 153–173 (LLTT…LCAY). 6 N-linked (GlcNAc...) asparagine glycosylation sites follow: Asn178, Asn268, Asn286, Asn327, Asn388, and Asn404. Helical transmembrane passes span 439-459 (CMIV…ILGF) and 483-503 (VGFS…LFLA). Asn576, Asn582, Asn617, and Asn693 each carry an N-linked (GlcNAc...) asparagine glycan.

Belongs to the prominin family.

The protein localises to the apical cell membrane. It is found in the cell projection. Its subcellular location is the microvillus membrane. It localises to the endoplasmic reticulum. The protein resides in the endoplasmic reticulum-Golgi intermediate compartment. Functionally, may play a role in cell differentiation, proliferation and apoptosis. Binds cholesterol in cholesterol-containing plasma membrane microdomains and may play a role in the organization of the apical plasma membrane in epithelial cells. Involved in regulation of MAPK and Akt signaling pathways. The sequence is that of Prominin-1-A (prom1a) from Danio rerio (Zebrafish).